The primary structure comprises 166 residues: Transcriptional repressor NrdR (166 aa).

The segment at Cys3–Cys34 is a zinc-finger region. The ATP-cone domain occupies Leu49 to Asp139.

The protein belongs to the NrdR family. Requires Zn(2+) as cofactor.

In terms of biological role, negatively regulates transcription of bacterial ribonucleotide reductase nrd genes and operons by binding to NrdR-boxes. This is Transcriptional repressor NrdR from Methylacidiphilum infernorum (isolate V4) (Methylokorus infernorum (strain V4)).